The following is a 146-amino-acid chain: Cyanate hydratase (146 aa).

Catalysis depends on residues Arg-87, Glu-90, and Ser-113.

This sequence belongs to the cyanase family.

It catalyses the reaction cyanate + hydrogencarbonate + 3 H(+) = NH4(+) + 2 CO2. Its function is as follows. Catalyzes the reaction of cyanate with bicarbonate to produce ammonia and carbon dioxide. This chain is Cyanate hydratase, found in Marinomonas sp. (strain MWYL1).